Here is a 124-residue protein sequence, read N- to C-terminus: Large ribosomal subunit protein bL19 (124 aa).

It belongs to the bacterial ribosomal protein bL19 family.

Its function is as follows. This protein is located at the 30S-50S ribosomal subunit interface and may play a role in the structure and function of the aminoacyl-tRNA binding site. The polypeptide is Large ribosomal subunit protein bL19 (Acidiphilium cryptum (strain JF-5)).